A 564-amino-acid chain; its full sequence is Probable diguanylate cyclase DgcQ (564 aa).

The next 2 helical transmembrane spans lie at 20–40 (LGPGHVVNLCFIVVLLFSTLL) and 360–380 (IALTLLWALFTTMLLISWYVI). The GGDEF domain maps to 428-563 (HPFSVIQVDL…GRNRVFASDN (136 aa)). Asp436 contributes to the Mg(2+) binding site. Residues Asn444, His449, and Asp453 each contribute to the substrate site. Glu479 contributes to the Mg(2+) binding site. Glu479 serves as the catalytic Proton acceptor.

Homodimer. Requires Mg(2+) as cofactor.

It localises to the cell inner membrane. The catalysed reaction is 2 GTP = 3',3'-c-di-GMP + 2 diphosphate. The protein operates within glycan metabolism; bacterial cellulose biosynthesis. It functions in the pathway purine metabolism; 3',5'-cyclic di-GMP biosynthesis. Catalyzes the synthesis of cyclic-di-GMP (c-di-GMP) via the condensation of 2 GTP molecules. Cyclic-di-GMP is a second messenger which controls cell surface-associated traits in bacteria. Involved in the regulation of cellulose production. This chain is Probable diguanylate cyclase DgcQ, found in Escherichia coli (strain K12).